The sequence spans 598 residues: Aspartate--tRNA(Asp/Asn) ligase (598 aa).

An L-aspartate-binding site is contributed by Glu177. Positions 201-204 (QIFK) are aspartate. The L-aspartate site is built by Arg223 and His451. Residue 223 to 225 (RDE) coordinates ATP. Position 485 (Glu485) interacts with ATP. Residue Arg492 participates in L-aspartate binding. 537 to 540 (GVDR) serves as a coordination point for ATP.

This sequence belongs to the class-II aminoacyl-tRNA synthetase family. Type 1 subfamily. Homodimer.

Its subcellular location is the cytoplasm. The enzyme catalyses tRNA(Asx) + L-aspartate + ATP = L-aspartyl-tRNA(Asx) + AMP + diphosphate. Its function is as follows. Aspartyl-tRNA synthetase with relaxed tRNA specificity since it is able to aspartylate not only its cognate tRNA(Asp) but also tRNA(Asn). Reaction proceeds in two steps: L-aspartate is first activated by ATP to form Asp-AMP and then transferred to the acceptor end of tRNA(Asp/Asn). In Anaplasma phagocytophilum (strain HZ), this protein is Aspartate--tRNA(Asp/Asn) ligase.